Reading from the N-terminus, the 248-residue chain is Mitochondrial import inner membrane translocase subunit Tim21 (248 aa).

Residues 1–18 constitute a mitochondrion transit peptide; it reads MICTFLRAVQYTEKLHRS. Positions 67-98 are disordered; the sequence is TQGPSPRKAKEDGSKQVSVHRSQRGGTAVPTS. A helical transmembrane segment spans residues 108-128; it reads FTYLIVVLFGISITGGLFYTI.

This sequence belongs to the TIM21 family. In terms of assembly, component of the TIM23 complex. Component of the MITRAC (mitochondrial translation regulation assembly intermediate of cytochrome c oxidase complex) complex, the core components of this complex being COA3/MITRAC12 and COX14. Interacts with COA3 and MT-CO1/COX1.

Its subcellular location is the mitochondrion membrane. Functionally, participates in the translocation of transit peptide-containing proteins across the mitochondrial inner membrane. Also required for assembly of mitochondrial respiratory chain complex I and complex IV as component of the MITRAC (mitochondrial translation regulation assembly intermediate of cytochrome c oxidase complex) complex. Probably shuttles between the presequence translocase and respiratory-chain assembly intermediates in a process that promotes incorporation of early nuclear-encoded subunits into these complexes. The protein is Mitochondrial import inner membrane translocase subunit Tim21 (TIMM21) of Homo sapiens (Human).